Here is a 259-residue protein sequence, read N- to C-terminus: PKHD-type hydroxylase PsycPRwf_1523 (259 aa).

Positions 80–180 (VIMPPLFSAY…RLAMVTWVQS (101 aa)) constitute a Fe2OG dioxygenase domain. Histidine 98, aspartate 100, and histidine 161 together coordinate Fe cation. Arginine 171 lines the 2-oxoglutarate pocket.

Requires Fe(2+) as cofactor. The cofactor is L-ascorbate.

The sequence is that of PKHD-type hydroxylase PsycPRwf_1523 from Psychrobacter sp. (strain PRwf-1).